The sequence spans 319 residues: Thioredoxin reductase (319 aa).

FAD contacts are provided by residues 11 to 14 (SGPA), 40 to 41 (IA), Gln-45, Asn-54, Cys-145, Asp-288, and 295 to 297 (RQA). A disulfide bond links Cys-142 and Cys-145.

Belongs to the class-II pyridine nucleotide-disulfide oxidoreductase family. As to quaternary structure, homodimer. Requires FAD as cofactor.

It is found in the cytoplasm. It catalyses the reaction [thioredoxin]-dithiol + NADP(+) = [thioredoxin]-disulfide + NADPH + H(+). The chain is Thioredoxin reductase (TRR1) from Candida glabrata (strain ATCC 2001 / BCRC 20586 / JCM 3761 / NBRC 0622 / NRRL Y-65 / CBS 138) (Yeast).